A 450-amino-acid polypeptide reads, in one-letter code: Tubulin alpha-3 chain (450 aa).

A GTP-binding site is contributed by Gln11. Lys40 carries the N6-acetyllysine modification. Positions 71, 144, 145, 179, 206, and 228 each coordinate GTP. Glu71 is a Mg(2+) binding site. The active site involves Glu254.

It belongs to the tubulin family. In terms of assembly, dimer of alpha and beta chains. A typical microtubule is a hollow water-filled tube with an outer diameter of 25 nm and an inner diameter of 15 nM. Alpha-beta heterodimers associate head-to-tail to form protofilaments running lengthwise along the microtubule wall with the beta-tubulin subunit facing the microtubule plus end conferring a structural polarity. Microtubules usually have 13 protofilaments but different protofilament numbers can be found in some organisms and specialized cells. It depends on Mg(2+) as a cofactor. In terms of processing, undergoes a tyrosination/detyrosination cycle, the cyclic removal and re-addition of a C-terminal tyrosine residue by the enzymes tubulin tyrosine carboxypeptidase (TTCP) and tubulin tyrosine ligase (TTL), respectively. Post-translationally, acetylation of alpha chains at Lys-40 stabilizes microtubules and affects affinity and processivity of microtubule motors. This modification has a role in multiple cellular functions, ranging from cell motility, cell cycle progression or cell differentiation to intracellular trafficking and signaling.

The protein localises to the cytoplasm. It localises to the cytoskeleton. It carries out the reaction GTP + H2O = GDP + phosphate + H(+). In terms of biological role, tubulin is the major constituent of microtubules, a cylinder consisting of laterally associated linear protofilaments composed of alpha- and beta-tubulin heterodimers. Microtubules grow by the addition of GTP-tubulin dimers to the microtubule end, where a stabilizing cap forms. Below the cap, tubulin dimers are in GDP-bound state, owing to GTPase activity of alpha-tubulin. This is Tubulin alpha-3 chain (TUBA3) from Zea mays (Maize).